The chain runs to 336 residues: Glycerol-3-phosphate dehydrogenase [NAD(P)+] (336 aa).

Residues S14, W15, R35, R36, and K109 each coordinate NADPH. The sn-glycerol 3-phosphate site is built by K109 and G139. Position 143 (A143) interacts with NADPH. Residues K194, D247, S257, R258, and N259 each contribute to the sn-glycerol 3-phosphate site. K194 functions as the Proton acceptor in the catalytic mechanism. R258 provides a ligand contact to NADPH. Position 284 (E284) interacts with NADPH.

It belongs to the NAD-dependent glycerol-3-phosphate dehydrogenase family.

The protein resides in the cytoplasm. The enzyme catalyses sn-glycerol 3-phosphate + NAD(+) = dihydroxyacetone phosphate + NADH + H(+). It carries out the reaction sn-glycerol 3-phosphate + NADP(+) = dihydroxyacetone phosphate + NADPH + H(+). It functions in the pathway membrane lipid metabolism; glycerophospholipid metabolism. Functionally, catalyzes the reduction of the glycolytic intermediate dihydroxyacetone phosphate (DHAP) to sn-glycerol 3-phosphate (G3P), the key precursor for phospholipid synthesis. The polypeptide is Glycerol-3-phosphate dehydrogenase [NAD(P)+] (Streptomyces coelicolor (strain ATCC BAA-471 / A3(2) / M145)).